Consider the following 195-residue polypeptide: Imidazoleglycerol-phosphate dehydratase (195 aa).

It belongs to the imidazoleglycerol-phosphate dehydratase family.

Its subcellular location is the cytoplasm. It carries out the reaction D-erythro-1-(imidazol-4-yl)glycerol 3-phosphate = 3-(imidazol-4-yl)-2-oxopropyl phosphate + H2O. It functions in the pathway amino-acid biosynthesis; L-histidine biosynthesis; L-histidine from 5-phospho-alpha-D-ribose 1-diphosphate: step 6/9. The sequence is that of Imidazoleglycerol-phosphate dehydratase from Bordetella avium (strain 197N).